The chain runs to 195 residues: Interferon omega-2 (195 aa).

An N-terminal signal peptide occupies residues 1–23 (MALLPSLLTALVVYELWPCGALG). 2 disulfides stabilise this stretch: Cys24–Cys122 and Cys52–Cys162. The N-linked (GlcNAc...) asparagine glycan is linked to Asn101.

The protein belongs to the alpha/beta interferon family.

It is found in the secreted. The polypeptide is Interferon omega-2 (Equus caballus (Horse)).